A 231-amino-acid polypeptide reads, in one-letter code: Ribose-5-phosphate isomerase A (231 aa).

Substrate is bound by residues 32–35 (TGST), 85–88 (DGAD), and 98–101 (KGGG). Catalysis depends on Glu-107, which acts as the Proton acceptor. Lys-125 contacts substrate.

The protein belongs to the ribose 5-phosphate isomerase family. In terms of assembly, homodimer.

It catalyses the reaction aldehydo-D-ribose 5-phosphate = D-ribulose 5-phosphate. It participates in carbohydrate degradation; pentose phosphate pathway; D-ribose 5-phosphate from D-ribulose 5-phosphate (non-oxidative stage): step 1/1. Catalyzes the reversible conversion of ribose-5-phosphate to ribulose 5-phosphate. In Burkholderia mallei (strain NCTC 10247), this protein is Ribose-5-phosphate isomerase A.